Consider the following 458-residue polypeptide: Tyrosine phenol-lyase (458 aa).

Lys-258 is modified (N6-(pyridoxal phosphate)lysine).

The protein belongs to the beta-eliminating lyase family. In terms of assembly, homotetramer. The cofactor is pyridoxal 5'-phosphate.

It catalyses the reaction L-tyrosine + H2O = phenol + pyruvate + NH4(+). The chain is Tyrosine phenol-lyase (tpl) from Symbiobacterium thermophilum (strain DSM 24528 / JCM 14929 / IAM 14863 / T).